Consider the following 326-residue polypeptide: Aspartate carbamoyltransferase catalytic subunit (326 aa).

2 residues coordinate carbamoyl phosphate: Arg65 and Thr66. Lys93 is an L-aspartate binding site. Carbamoyl phosphate-binding residues include Arg115, His143, and Gln146. 2 residues coordinate L-aspartate: Arg176 and Arg230. Carbamoyl phosphate contacts are provided by Gly271 and Pro272.

The protein belongs to the aspartate/ornithine carbamoyltransferase superfamily. ATCase family. As to quaternary structure, heterododecamer (2C3:3R2) of six catalytic PyrB chains organized as two trimers (C3), and six regulatory PyrI chains organized as three dimers (R2).

The enzyme catalyses carbamoyl phosphate + L-aspartate = N-carbamoyl-L-aspartate + phosphate + H(+). It functions in the pathway pyrimidine metabolism; UMP biosynthesis via de novo pathway; (S)-dihydroorotate from bicarbonate: step 2/3. Catalyzes the condensation of carbamoyl phosphate and aspartate to form carbamoyl aspartate and inorganic phosphate, the committed step in the de novo pyrimidine nucleotide biosynthesis pathway. In Mesorhizobium japonicum (strain LMG 29417 / CECT 9101 / MAFF 303099) (Mesorhizobium loti (strain MAFF 303099)), this protein is Aspartate carbamoyltransferase catalytic subunit.